The sequence spans 77 residues: P fimbrial regulatory protein KS71A (77 aa).

The sequence is that of P fimbrial regulatory protein KS71A (KS71A) from Escherichia coli.